A 169-amino-acid polypeptide reads, in one-letter code: Deoxyuridine 5'-triphosphate nucleotidohydrolase (169 aa).

Positions 1 to 10 (MAENQINSPE) are enriched in polar residues. The segment at 1–25 (MAENQINSPEITEPSPKVQKLDHPE) is disordered. Residues 91 to 93 (RSG), 105 to 108 (GVID), glycine 116, arginine 159, and 164 to 165 (FG) contribute to the substrate site.

Belongs to the dUTPase family. Homodimer. Mg(2+) is required as a cofactor. Vegetative and floral merismatic cells and provascular and vascular merismatic derivatives.

It catalyses the reaction dUTP + H2O = dUMP + diphosphate + H(+). It functions in the pathway pyrimidine metabolism; dUMP biosynthesis; dUMP from dCTP (dUTP route): step 2/2. In terms of biological role, this enzyme is involved in nucleotide metabolism: it produces dUMP, the immediate precursor of thymidine nucleotides and it decreases the intracellular concentration of dUTP so that uracil cannot be incorporated into DNA. It may have as well a metabolic role in merismatic cells. The polypeptide is Deoxyuridine 5'-triphosphate nucleotidohydrolase (Solanum lycopersicum (Tomato)).